The following is a 183-amino-acid chain: ATP synthase subunit delta (183 aa).

The protein belongs to the ATPase delta chain family. In terms of assembly, F-type ATPases have 2 components, F(1) - the catalytic core - and F(0) - the membrane proton channel. F(1) has five subunits: alpha(3), beta(3), gamma(1), delta(1), epsilon(1). F(0) has three main subunits: a(1), b(2) and c(10-14). The alpha and beta chains form an alternating ring which encloses part of the gamma chain. F(1) is attached to F(0) by a central stalk formed by the gamma and epsilon chains, while a peripheral stalk is formed by the delta and b chains.

The protein resides in the cell membrane. In terms of biological role, f(1)F(0) ATP synthase produces ATP from ADP in the presence of a proton or sodium gradient. F-type ATPases consist of two structural domains, F(1) containing the extramembraneous catalytic core and F(0) containing the membrane proton channel, linked together by a central stalk and a peripheral stalk. During catalysis, ATP synthesis in the catalytic domain of F(1) is coupled via a rotary mechanism of the central stalk subunits to proton translocation. Its function is as follows. This protein is part of the stalk that links CF(0) to CF(1). It either transmits conformational changes from CF(0) to CF(1) or is implicated in proton conduction. In Mycoplasmopsis synoviae (strain 53) (Mycoplasma synoviae), this protein is ATP synthase subunit delta.